The primary structure comprises 323 residues: Cytochrome c biogenesis protein CcsA (323 aa).

8 helical membrane-spanning segments follow: residues 9-29, 45-62, 71-91, 98-118, 143-163, 227-247, 261-275, and 285-305; these read ILTHISFSIISIVITIHLLNL, MMATFFCITGLLVTRWIY, LYESLMFLSWSFSIIHMVPYF, LSAITAPSAIFTQGFATSGLL, MLLGYASLLCGSLLSVALLVI, IISLGFTFSTIGILSGAVWAN, TWAFITWTIFAIYLH, and VGPAIVASMGFLIIWICYFGV.

It belongs to the CcmF/CycK/Ccl1/NrfE/CcsA family. May interact with Ccs1.

The protein resides in the plastid. Its subcellular location is the chloroplast thylakoid membrane. In terms of biological role, required during biogenesis of c-type cytochromes (cytochrome c6 and cytochrome f) at the step of heme attachment. The polypeptide is Cytochrome c biogenesis protein CcsA (Calycanthus floridus var. glaucus (Eastern sweetshrub)).